The following is a 292-amino-acid chain: uncharacterized protein (292 aa).

Belongs to the glycosyltransferase 2 family. WaaE/KdtX subfamily.

This is an uncharacterized protein from Rickettsia typhi (strain ATCC VR-144 / Wilmington).